We begin with the raw amino-acid sequence, 109 residues long: Hainantoxin-XVIII-5 (109 aa).

The N-terminal stretch at 1–18 (MKLSIIIIATSLVIAVVA) is a signal peptide. The propeptide occupies 19–46 (FPSKDSKAIENDKTEQRMEIVVQETARA). Disulfide bonds link Cys-47–Cys-62, Cys-55–Cys-68, Cys-59–Cys-108, and Cys-61–Cys-81.

Belongs to the neurotoxin 25 family. F7 subfamily. As to expression, expressed by the venom gland.

It localises to the secreted. In terms of biological role, putative ion channel inhibitor. The chain is Hainantoxin-XVIII-5 from Cyriopagopus hainanus (Chinese bird spider).